The sequence spans 291 residues: Polyamine aminopropyltransferase (291 aa).

Residues 5 to 245 (PGPIVLMEPL…YAVNFVLGSL (241 aa)) form the PABS domain. Residue Q36 coordinates S-methyl-5'-thioadenosine. Positions 67 and 91 each coordinate spermidine. S-methyl-5'-thioadenosine-binding positions include D111 and 143-144 (DG). D164 acts as the Proton acceptor in catalysis.

The protein belongs to the spermidine/spermine synthase family. In terms of assembly, homodimer or homotetramer.

It is found in the cytoplasm. It carries out the reaction norspermidine + S-adenosyl 3-(methylsulfanyl)propylamine = norspermine + S-methyl-5'-thioadenosine + H(+). It catalyses the reaction S-adenosyl 3-(methylsulfanyl)propylamine + spermidine = thermospermine + S-methyl-5'-thioadenosine + H(+). Its function is as follows. Involved in the biosynthesis of polyamines which are thought to support the growth of thermophilic microorganisms under high-temperature conditions. It seems that long-chain and branched-chain of polyamines effectively stabilize DNA and RNA, respectively. Catalyzes the irreversible transfer of a propylamine group from the amino donor S-adenosylmethioninamine (decarboxy-AdoMet) to norspermidine and 1,3-diaminopropane to yield norspermine, and to spermidine to yield thermospermine. It can also synthesize thermospermine from putrescine (1,4-diaminobutane) and caldopentamine from norspermine with a very low activity. The biosynthesis of caldohexamine and caldoheptamine from caldopentamine has been also observed. The sequence is that of Polyamine aminopropyltransferase from Pyrobaculum aerophilum (strain ATCC 51768 / DSM 7523 / JCM 9630 / CIP 104966 / NBRC 100827 / IM2).